Here is a 109-residue protein sequence, read N- to C-terminus: Mitochondrial pyruvate carrier 2 (109 aa).

The next 3 helical transmembrane spans lie at 19-35 (IHFW…IANI), 51-67 (IAVT…STII), and 74-90 (LFSV…YQLT).

It belongs to the mitochondrial pyruvate carrier (MPC) (TC 2.A.105) family.

The protein localises to the mitochondrion inner membrane. Mediates the uptake of pyruvate into mitochondria. This chain is Mitochondrial pyruvate carrier 2, found in Arabidopsis thaliana (Mouse-ear cress).